The primary structure comprises 39 residues: Natriuretic peptide HsNP-a (39 aa).

A propeptide spanning residues 1–8 (SGSKTAKI) is cleaved from the precursor. A disulfide bridge connects residues C12 and C28.

The protein belongs to the natriuretic peptide family. As to expression, expressed by the venom gland.

Its subcellular location is the secreted. In terms of biological role, snake venom natriuretic peptide that targets both NPR1 and NPR2. Exhibits hypotensive and vasodepressor activities. In Hoplocephalus stephensii (Stephens's banded snake), this protein is Natriuretic peptide HsNP-a.